The following is a 348-amino-acid chain: MLTKRQLLVLKEIIRLFTESGQPVGSKTLMQELPVHVSSATIRNDMAALEDAGLITKTHSSSGRVPSTQGYRYYLDHLVEPVRVSRHDLATIKQELGQRYSKMDEIVAQSVQILSNLTSYTAISLGPEVNNIKLTGFRLVPLGNHQVMAILVTNNGNVENQVFTVPPSISSDELEKAIRIVNDQLVGLPLVQVAQRLRTDVPSMLMQYLTSPDGFLDIFGNVLKSAASERFYVGGRLNLMDYLGDSDIHELKKIMSLIDADHGDLTELLGGPIRQTPVQVRLGPELKPIDLANLSLITASYDVGGHGTGMIALLGPTQMPYSKMIGLLDVFREELAKRLTDYYANFDQ.

It belongs to the HrcA family.

Functionally, negative regulator of class I heat shock genes (grpE-dnaK-dnaJ and groELS operons). Prevents heat-shock induction of these operons. The protein is Heat-inducible transcription repressor HrcA of Lacticaseibacillus casei (strain BL23) (Lactobacillus casei).